A 728-amino-acid chain; its full sequence is Meiotic sister-chromatid recombination protein 3 (728 aa).

7 disordered regions span residues 33 to 171 (QLSA…GRTQ), 236 to 261 (NETD…LNVE), 300 to 335 (PTHQ…EAEA), 363 to 403 (SDNA…VKSN), 422 to 454 (SAPH…ANTG), 495 to 514 (VGVS…QHYL), and 561 to 728 (YGYQ…KSSR). Positions 35–46 (SAAAASAASAAS) are enriched in low complexity. Residues 48 to 58 (DRTNYSRSHSL) are compositionally biased toward polar residues. A phosphoserine mark is found at serine 57 and serine 64. The span at 80–93 (STSSAAPPTSRAAA) shows a compositional bias: low complexity. Polar residues-rich tracts occupy residues 95–106 (QYSQKTYSLRSQ), 118–132 (YTTN…TSGA), and 140–171 (KNKS…GRTQ). A phosphoserine mark is found at serine 127, serine 151, and serine 155. The span at 251–261 (HLQDDSELNVE) shows a compositional bias: basic and acidic residues. A compositionally biased stretch (basic residues) spans 309 to 326 (IHNKRKQASTTRRKKRPP). Serine 363 is modified (phosphoserine). Composition is skewed to polar residues over residues 363-373 (SDNASAPLGSN) and 385-403 (TLRS…VKSN). Residues 590–634 (EGVTTAKPSSNEGVMTNPVVTDSPSPLQQQIDSTTASSNGQSQGN) show a composition bias toward polar residues. A compositionally biased stretch (low complexity) spans 635–646 (VPTSAVASTTRT). Threonine 646 bears the Phosphothreonine mark. 3 stretches are compositionally biased toward polar residues: residues 654–668 (NLKS…QTPQ), 675–684 (DPTTSSTNEL), and 691–708 (MVTS…TQDP). Residue serine 660 is modified to Phosphoserine. A compositionally biased stretch (basic residues) spans 711 to 728 (KHKKSSFFTKLFKKKSSR).

It localises to the cell membrane. Its function is as follows. May be involved in the control of meiotic sister-chromatid recombination. The chain is Meiotic sister-chromatid recombination protein 3 (MSC3) from Saccharomyces cerevisiae (strain ATCC 204508 / S288c) (Baker's yeast).